The primary structure comprises 273 residues: Aegyptin (273 aa).

Residues 1–19 (MKPLVKLFLLFCLVGIVLS) form the signal peptide. The interval 20 to 160 (RPMPEDEEPV…SEKNDPADTY (141 aa)) is disordered. The span at 24-62 (EDEEPVAEGGDDDASGESEGEEETTDDAGGDGGEEENEG) shows a compositional bias: acidic residues. The segment covering 63-86 (EEHAGDKDAGGEDTGKEENTGHDD) has biased composition (basic and acidic residues). Over residues 87–145 (AGEEDAGEEDAGEEDAGEEDAGEEDAEKEEGEKEDAGDDAGSDDGEEDSTGGDEGEDNA) the composition is skewed to acidic residues. Positions 137 to 273 (GGDEGEDNAE…IKSCVSSKGR (137 aa)) are mediates binding of host collagen. Over residues 146-158 (EDSKGSEKNDPAD) the composition is skewed to basic and acidic residues. Intrachain disulfides connect Cys-213/Cys-267 and Cys-235/Cys-245.

This sequence belongs to the aegyptin family. Monomer; exhibits non-globular elongated shape in solution. Female saliva (at protein level). Adult female salivary gland (at protein level).

The protein localises to the secreted. Modulates blood feeding of female mosquitoes on vertebrate hosts. Inhibits collagen-induced platelet aggregation in the host via preventing collagen interaction with its three major ligands: glycoprotein VI, integrin alpha-2/beta-1 (ITGA2/ITGB1) and von Willebrand factor (VWF). Prevents collagen-mediated thrombus formation in the host. Binds to host collagens but not to laminin, vitronectin (VTN), fibronectin (FN1), von Willebrand factor (VWF) and fibrinogen. Influences cytokine production and populations of circulating leukocytes. Its function is as follows. (Microbial infection) Reduces replication of dengue virus type 2 at inoculation site and viremia levels on day 2 post-inoculation. Promotes production of pro-inflammatory cytokines, such as GM-CSF (CSF2), IFN-gamma (IFNG), IL5 and IL6, in the lymph nodes of mice infected with dengue virus type 2. Increases the number of circulating eosinophils in mice infected with dengue virus type 2. Decreases the number of circulating monocytes in mice infected with dengue virus type 2. The protein is Aegyptin of Aedes aegypti (Yellowfever mosquito).